Reading from the N-terminus, the 319-residue chain is Beta-ketoacyl-[acyl-carrier-protein] synthase III (319 aa).

Residues Cys112 and His246 contribute to the active site. The tract at residues 247–251 (QANFR) is ACP-binding. Residue Asn276 is part of the active site.

The protein belongs to the thiolase-like superfamily. FabH family. In terms of assembly, homodimer.

It is found in the cytoplasm. The enzyme catalyses malonyl-[ACP] + acetyl-CoA + H(+) = 3-oxobutanoyl-[ACP] + CO2 + CoA. It functions in the pathway lipid metabolism; fatty acid biosynthesis. In terms of biological role, catalyzes the condensation reaction of fatty acid synthesis by the addition to an acyl acceptor of two carbons from malonyl-ACP. Catalyzes the first condensation reaction which initiates fatty acid synthesis and may therefore play a role in governing the total rate of fatty acid production. Possesses both acetoacetyl-ACP synthase and acetyl transacylase activities. Its substrate specificity determines the biosynthesis of branched-chain and/or straight-chain of fatty acids. The chain is Beta-ketoacyl-[acyl-carrier-protein] synthase III from Shewanella oneidensis (strain ATCC 700550 / JCM 31522 / CIP 106686 / LMG 19005 / NCIMB 14063 / MR-1).